The chain runs to 256 residues: Thiazole synthase (256 aa).

The Schiff-base intermediate with DXP role is filled by Lys-95. 1-deoxy-D-xylulose 5-phosphate-binding positions include Gly-156, 182 to 183 (AG), and 204 to 205 (NT).

This sequence belongs to the ThiG family. As to quaternary structure, homotetramer. Forms heterodimers with either ThiH or ThiS.

Its subcellular location is the cytoplasm. The enzyme catalyses [ThiS sulfur-carrier protein]-C-terminal-Gly-aminoethanethioate + 2-iminoacetate + 1-deoxy-D-xylulose 5-phosphate = [ThiS sulfur-carrier protein]-C-terminal Gly-Gly + 2-[(2R,5Z)-2-carboxy-4-methylthiazol-5(2H)-ylidene]ethyl phosphate + 2 H2O + H(+). The protein operates within cofactor biosynthesis; thiamine diphosphate biosynthesis. Catalyzes the rearrangement of 1-deoxy-D-xylulose 5-phosphate (DXP) to produce the thiazole phosphate moiety of thiamine. Sulfur is provided by the thiocarboxylate moiety of the carrier protein ThiS. In vitro, sulfur can be provided by H(2)S. This chain is Thiazole synthase, found in Salmonella schwarzengrund (strain CVM19633).